The primary structure comprises 202 residues: MGEVVLPGTAIGLKTSEGVVLASEKRLTYDGFVLSRNARKIHMITNHIGVGFAGLMGDVNFLVKVLRLEAKNYELQHGREIKTRSLAKLLSVILYSYKLAPMLTEVVVGGYDEEGPSLYILDPVGSVIEEKYVAVGSGAQLALGYIEPRYNPGLGLKEAEELAVNAVKTVIERDVLSGDGIDLVVIDKNGYQSKEIIFKMTG.

Residues 1–8 (MGEVVLPG) constitute a propeptide, removed in mature form; by autocatalysis. Threonine 9 serves as the catalytic Nucleophile.

Belongs to the peptidase T1B family. The 20S proteasome core is composed of 14 alpha and 14 beta subunits that assemble into four stacked heptameric rings, resulting in a barrel-shaped structure. The two inner rings, each composed of seven catalytic beta subunits, are sandwiched by two outer rings, each composed of seven alpha subunits. The catalytic chamber with the active sites is on the inside of the barrel. Has a gated structure, the ends of the cylinder being occluded by the N-termini of the alpha-subunits. Is capped at one or both ends by the proteasome regulatory ATPase, PAN.

It is found in the cytoplasm. The enzyme catalyses Cleavage of peptide bonds with very broad specificity.. The formation of the proteasomal ATPase PAN-20S proteasome complex, via the docking of the C-termini of PAN into the intersubunit pockets in the alpha-rings, triggers opening of the gate for substrate entry. Interconversion between the open-gate and close-gate conformations leads to a dynamic regulation of the 20S proteasome proteolysis activity. Component of the proteasome core, a large protease complex with broad specificity involved in protein degradation. This Desulfurococcus amylolyticus (strain DSM 18924 / JCM 16383 / VKM B-2413 / 1221n) (Desulfurococcus kamchatkensis) protein is Proteasome subunit beta 1.